The chain runs to 425 residues: Gamma-glutamyl phosphate reductase (425 aa).

This sequence belongs to the gamma-glutamyl phosphate reductase family.

It is found in the cytoplasm. The catalysed reaction is L-glutamate 5-semialdehyde + phosphate + NADP(+) = L-glutamyl 5-phosphate + NADPH + H(+). The protein operates within amino-acid biosynthesis; L-proline biosynthesis; L-glutamate 5-semialdehyde from L-glutamate: step 2/2. Catalyzes the NADPH-dependent reduction of L-glutamate 5-phosphate into L-glutamate 5-semialdehyde and phosphate. The product spontaneously undergoes cyclization to form 1-pyrroline-5-carboxylate. The chain is Gamma-glutamyl phosphate reductase from Opitutus terrae (strain DSM 11246 / JCM 15787 / PB90-1).